The following is a 2655-amino-acid chain: Probable polyketide synthase 42 (2655 aa).

The region spanning 16 to 445 (QNGVAVIGVG…GSNCCIILSE (430 aa)) is the Ketosynthase family 3 (KS3) domain. Residues Cys186, His325, and His368 each act as for beta-ketoacyl synthase activity in the active site. The segment at 634–667 (GIKSDIMVGHSFGEIACSYCSGMVDFKTLCYLTY) is acyl/malonyl transferase. Residue Ser644 is the For acyl/malonyl transferase activity of the active site. The segment at 926–1059 (HPTWKKANKN…ANYSLFKHND (134 aa)) is N-terminal hotdog fold. Residues 926 to 1234 (HPTWKKANKN…CKSSIPIIDS (309 aa)) form the PKS/mFAS DH domain. His970 functions as the Proton acceptor; for dehydratase activity in the catalytic mechanism. The C-terminal hotdog fold stretch occupies residues 1074–1234 (NYTIISKDEL…CKSSIPIIDS (161 aa)). Residue Asp1146 is the Proton donor; for dehydratase activity of the active site. Residues 1700-1719 (YNNNNNNNNNNNNNNNNNNN) are disordered. The region spanning 2517–2594 (NENNNIGDLL…TTIEIIIKGY (78 aa)) is the Carrier domain. O-(pantetheine 4'-phosphoryl)serine is present on Ser2554. The tract at residues 2612–2655 (SVVQKETIKDNNENKDDIKIDMDDKKENLKGKKENIDDKKENNN) is disordered. The segment covering 2617 to 2655 (ETIKDNNENKDDIKIDMDDKKENLKGKKENIDDKKENNN) has biased composition (basic and acidic residues). Residues 2618 to 2655 (TIKDNNENKDDIKIDMDDKKENLKGKKENIDDKKENNN) are a coiled coil.

The cofactor is pantetheine 4'-phosphate.

Functionally, probable polyketide synthase. This is Probable polyketide synthase 42 (pks42) from Dictyostelium discoideum (Social amoeba).